Reading from the N-terminus, the 150-residue chain is Arginine repressor (150 aa).

Belongs to the ArgR family.

The protein resides in the cytoplasm. The protein operates within amino-acid biosynthesis; L-arginine biosynthesis [regulation]. Regulates arginine biosynthesis genes. In Psychromonas ingrahamii (strain DSM 17664 / CCUG 51855 / 37), this protein is Arginine repressor.